The chain runs to 90 residues: Small ribosomal subunit protein bS16 (90 aa).

The protein belongs to the bacterial ribosomal protein bS16 family.

The protein is Small ribosomal subunit protein bS16 of Streptococcus pyogenes serotype M4 (strain MGAS10750).